The primary structure comprises 357 residues: Spore coat protein I (357 aa).

Belongs to the CotS family.

It is found in the spore coat. The sequence is that of Spore coat protein I (cotI) from Bacillus subtilis (strain 168).